The primary structure comprises 84 residues: UPF0473 protein CLD_2004 (84 aa).

The protein belongs to the UPF0473 family.

In Clostridium botulinum (strain Okra / Type B1), this protein is UPF0473 protein CLD_2004.